The sequence spans 151 residues: Deoxyuridine 5'-triphosphate nucleotidohydrolase (151 aa).

Residues 70–72 (RSG), Asn83, 87–89 (LID), and Met97 contribute to the substrate site.

The protein belongs to the dUTPase family. The cofactor is Mg(2+).

The catalysed reaction is dUTP + H2O = dUMP + diphosphate + H(+). Its pathway is pyrimidine metabolism; dUMP biosynthesis; dUMP from dCTP (dUTP route): step 2/2. In terms of biological role, this enzyme is involved in nucleotide metabolism: it produces dUMP, the immediate precursor of thymidine nucleotides and it decreases the intracellular concentration of dUTP so that uracil cannot be incorporated into DNA. The polypeptide is Deoxyuridine 5'-triphosphate nucleotidohydrolase (Pseudomonas fluorescens (strain Pf0-1)).